A 497-amino-acid chain; its full sequence is Lysine--tRNA ligase (497 aa).

E405 and E412 together coordinate Mg(2+).

This sequence belongs to the class-II aminoacyl-tRNA synthetase family. Homodimer. The cofactor is Mg(2+).

The protein resides in the cytoplasm. It carries out the reaction tRNA(Lys) + L-lysine + ATP = L-lysyl-tRNA(Lys) + AMP + diphosphate. The sequence is that of Lysine--tRNA ligase from Gloeobacter violaceus (strain ATCC 29082 / PCC 7421).